Consider the following 499-residue polypeptide: Probable cytosol aminopeptidase (499 aa).

2 residues coordinate Mn(2+): lysine 263 and aspartate 268. Lysine 275 is a catalytic residue. The Mn(2+) site is built by aspartate 286, aspartate 345, and glutamate 347. Arginine 349 is a catalytic residue.

Belongs to the peptidase M17 family. The cofactor is Mn(2+).

The protein resides in the cytoplasm. The catalysed reaction is Release of an N-terminal amino acid, Xaa-|-Yaa-, in which Xaa is preferably Leu, but may be other amino acids including Pro although not Arg or Lys, and Yaa may be Pro. Amino acid amides and methyl esters are also readily hydrolyzed, but rates on arylamides are exceedingly low.. It catalyses the reaction Release of an N-terminal amino acid, preferentially leucine, but not glutamic or aspartic acids.. Its function is as follows. Presumably involved in the processing and regular turnover of intracellular proteins. Catalyzes the removal of unsubstituted N-terminal amino acids from various peptides. The protein is Probable cytosol aminopeptidase (pepA) of Chlamydia trachomatis serovar D (strain ATCC VR-885 / DSM 19411 / UW-3/Cx).